We begin with the raw amino-acid sequence, 208 residues long: Protein-L-isoaspartate O-methyltransferase (208 aa).

S59 is a catalytic residue.

This sequence belongs to the methyltransferase superfamily. L-isoaspartyl/D-aspartyl protein methyltransferase family.

The protein resides in the cytoplasm. It catalyses the reaction [protein]-L-isoaspartate + S-adenosyl-L-methionine = [protein]-L-isoaspartate alpha-methyl ester + S-adenosyl-L-homocysteine. Its function is as follows. Catalyzes the methyl esterification of L-isoaspartyl residues in peptides and proteins that result from spontaneous decomposition of normal L-aspartyl and L-asparaginyl residues. It plays a role in the repair and/or degradation of damaged proteins. This Aliivibrio fischeri (strain ATCC 700601 / ES114) (Vibrio fischeri) protein is Protein-L-isoaspartate O-methyltransferase.